Consider the following 539-residue polypeptide: Phosphoenolpyruvate carboxykinase (ATP) (539 aa).

The substrate site is built by Arg-64, Tyr-206, and Lys-212. Residues Lys-212, His-231, and 247–255 (GLSGTGKTT) each bind ATP. Mn(2+) contacts are provided by Lys-212 and His-231. Mn(2+) is bound at residue Asp-268. ATP contacts are provided by residues Glu-296, Arg-332, 448 to 449 (RI), and Thr-454. Substrate is bound at residue Arg-332.

It belongs to the phosphoenolpyruvate carboxykinase (ATP) family. As to quaternary structure, monomer. The cofactor is Mn(2+).

Its subcellular location is the cytoplasm. It catalyses the reaction oxaloacetate + ATP = phosphoenolpyruvate + ADP + CO2. Its pathway is carbohydrate biosynthesis; gluconeogenesis. Its function is as follows. Involved in the gluconeogenesis. Catalyzes the conversion of oxaloacetate (OAA) to phosphoenolpyruvate (PEP) through direct phosphoryl transfer between the nucleoside triphosphate and OAA. The chain is Phosphoenolpyruvate carboxykinase (ATP) from Citrobacter koseri (strain ATCC BAA-895 / CDC 4225-83 / SGSC4696).